Here is a 198-residue protein sequence, read N- to C-terminus: Recombination protein RecR (198 aa).

The C4-type zinc-finger motif lies at Cys-57 to Cys-72. Residues Ser-80–Pro-175 form the Toprim domain.

This sequence belongs to the RecR family.

May play a role in DNA repair. It seems to be involved in an RecBC-independent recombinational process of DNA repair. It may act with RecF and RecO. In Listeria welshimeri serovar 6b (strain ATCC 35897 / DSM 20650 / CCUG 15529 / CIP 8149 / NCTC 11857 / SLCC 5334 / V8), this protein is Recombination protein RecR.